A 544-amino-acid polypeptide reads, in one-letter code: CTP synthase (544 aa).

Residues 1–265 (MTKFIFVTGG…DNIITEQLQL (265 aa)) are amidoligase domain. Ser13 provides a ligand contact to CTP. Residue Ser13 coordinates UTP. ATP contacts are provided by residues 14–19 (SLGKGI) and Asp71. Asp71 and Glu139 together coordinate Mg(2+). Residues 146–148 (DIE), 186–191 (KTKPTQ), and Lys222 each bind CTP. Residues 186 to 191 (KTKPTQ) and Lys222 contribute to the UTP site. A Glutamine amidotransferase type-1 domain is found at 290–544 (KIAMVGKYVD…VKAALNNKKA (255 aa)). Position 353 (Gly353) interacts with L-glutamine. Catalysis depends on Cys380, which acts as the Nucleophile; for glutamine hydrolysis. Residues 381–384 (LGMQ), Glu404, and Arg471 contribute to the L-glutamine site. Active-site residues include His517 and Glu519.

It belongs to the CTP synthase family. In terms of assembly, homotetramer.

The enzyme catalyses UTP + L-glutamine + ATP + H2O = CTP + L-glutamate + ADP + phosphate + 2 H(+). It catalyses the reaction L-glutamine + H2O = L-glutamate + NH4(+). It carries out the reaction UTP + NH4(+) + ATP = CTP + ADP + phosphate + 2 H(+). It functions in the pathway pyrimidine metabolism; CTP biosynthesis via de novo pathway; CTP from UDP: step 2/2. Its activity is regulated as follows. Allosterically activated by GTP, when glutamine is the substrate; GTP has no effect on the reaction when ammonia is the substrate. The allosteric effector GTP functions by stabilizing the protein conformation that binds the tetrahedral intermediate(s) formed during glutamine hydrolysis. Inhibited by the product CTP, via allosteric rather than competitive inhibition. Its function is as follows. Catalyzes the ATP-dependent amination of UTP to CTP with either L-glutamine or ammonia as the source of nitrogen. Regulates intracellular CTP levels through interactions with the four ribonucleotide triphosphates. This chain is CTP synthase, found in Neisseria meningitidis serogroup A / serotype 4A (strain DSM 15465 / Z2491).